The primary structure comprises 132 residues: Small ribosomal subunit protein uS8 (132 aa).

This sequence belongs to the universal ribosomal protein uS8 family. In terms of assembly, part of the 30S ribosomal subunit. Contacts proteins S5 and S12.

Its function is as follows. One of the primary rRNA binding proteins, it binds directly to 16S rRNA central domain where it helps coordinate assembly of the platform of the 30S subunit. The chain is Small ribosomal subunit protein uS8 from Clostridium botulinum (strain ATCC 19397 / Type A).